Reading from the N-terminus, the 188-residue chain is Urease accessory protein UreE (188 aa).

Residues 142–174 (AYQSQAGAGHHHHHDHDHGHSHDHSHTHSHADS) form a disordered region. A compositionally biased stretch (basic and acidic residues) spans 157–172 (HDHGHSHDHSHTHSHA).

The protein belongs to the UreE family.

It localises to the cytoplasm. Involved in urease metallocenter assembly. Binds nickel. Probably functions as a nickel donor during metallocenter assembly. This is Urease accessory protein UreE from Tolumonas auensis (strain DSM 9187 / NBRC 110442 / TA 4).